The sequence spans 284 residues: Tropomyosin (284 aa).

Residues 1–284 are a coiled coil; the sequence is MDAIKKKMQA…DQTFQELSGY (284 aa). Residues 110–142 show a composition bias toward basic and acidic residues; it reads TAKLEEATHTADESERVRKVMENRSFQDEERAN. Positions 110-143 are disordered; it reads TAKLEEATHTADESERVRKVMENRSFQDEERANT.

Belongs to the tropomyosin family.

In terms of biological role, tropomyosin, in association with the troponin complex, plays a central role in the calcium dependent regulation of muscle contraction. This chain is Tropomyosin, found in Anisakis simplex (Herring worm).